A 380-amino-acid chain; its full sequence is Queuine tRNA-ribosyltransferase (380 aa).

Asp96 functions as the Proton acceptor in the catalytic mechanism. Residues Asp96–Phe100, Asp150, Gln193, and Gly220 each bind substrate. The tract at residues Gly251–Ser257 is RNA binding. Asp270 acts as the Nucleophile in catalysis. Residues Thr275 to Arg279 form an RNA binding; important for wobble base 34 recognition region. Zn(2+) is bound by residues Cys308, Cys310, Cys313, and His339.

It belongs to the queuine tRNA-ribosyltransferase family. As to quaternary structure, homodimer. Within each dimer, one monomer is responsible for RNA recognition and catalysis, while the other monomer binds to the replacement base PreQ1. It depends on Zn(2+) as a cofactor.

It catalyses the reaction 7-aminomethyl-7-carbaguanine + guanosine(34) in tRNA = 7-aminomethyl-7-carbaguanosine(34) in tRNA + guanine. It functions in the pathway tRNA modification; tRNA-queuosine biosynthesis. Functionally, catalyzes the base-exchange of a guanine (G) residue with the queuine precursor 7-aminomethyl-7-deazaguanine (PreQ1) at position 34 (anticodon wobble position) in tRNAs with GU(N) anticodons (tRNA-Asp, -Asn, -His and -Tyr). Catalysis occurs through a double-displacement mechanism. The nucleophile active site attacks the C1' of nucleotide 34 to detach the guanine base from the RNA, forming a covalent enzyme-RNA intermediate. The proton acceptor active site deprotonates the incoming PreQ1, allowing a nucleophilic attack on the C1' of the ribose to form the product. After dissociation, two additional enzymatic reactions on the tRNA convert PreQ1 to queuine (Q), resulting in the hypermodified nucleoside queuosine (7-(((4,5-cis-dihydroxy-2-cyclopenten-1-yl)amino)methyl)-7-deazaguanosine). This chain is Queuine tRNA-ribosyltransferase, found in Streptococcus mutans serotype c (strain ATCC 700610 / UA159).